A 345-amino-acid polypeptide reads, in one-letter code: N-glycosylase/DNA lyase (345 aa).

DNA contacts are provided by asparagine 149, arginine 154, and arginine 204. Lysine 249 functions as the Schiff-base intermediate with DNA in the catalytic mechanism. Residues proline 266 and aspartate 268 each contribute to the 8-oxoguanine site. DNA is bound by residues histidine 270 and glutamine 287. Residues glutamine 315 and phenylalanine 319 each coordinate 8-oxoguanine. Residues 324 to 334 (RQSRHAQEPPA) are compositionally biased toward basic and acidic residues. A disordered region spans residues 324–345 (RQSRHAQEPPAKRRKGSKGPEG). Residues 335 to 345 (KRRKGSKGPEG) are compositionally biased toward basic residues.

This sequence belongs to the type-1 OGG1 family. Ubiquitous.

It localises to the nucleus. It is found in the nucleoplasm. The protein localises to the nucleus speckle. Its subcellular location is the nucleus matrix. The protein resides in the mitochondrion. It carries out the reaction 2'-deoxyribonucleotide-(2'-deoxyribose 5'-phosphate)-2'-deoxyribonucleotide-DNA = a 3'-end 2'-deoxyribonucleotide-(2,3-dehydro-2,3-deoxyribose 5'-phosphate)-DNA + a 5'-end 5'-phospho-2'-deoxyribonucleoside-DNA + H(+). DNA repair enzyme that incises DNA at 8-oxoG residues. Excises 7,8-dihydro-8-oxoguanine and 2,6-diamino-4-hydroxy-5-N-methylformamidopyrimidine (FAPY) from damaged DNA. Has a beta-lyase activity that nicks DNA 3' to the lesion. The protein is N-glycosylase/DNA lyase (OGG1) of Homo sapiens (Human).